Consider the following 137-residue polypeptide: Large ribosomal subunit protein uL16 (137 aa).

It belongs to the universal ribosomal protein uL16 family. As to quaternary structure, part of the 50S ribosomal subunit.

In terms of biological role, binds 23S rRNA and is also seen to make contacts with the A and possibly P site tRNAs. The chain is Large ribosomal subunit protein uL16 from Streptococcus pyogenes serotype M1.